The following is a 260-amino-acid chain: Adenosylcobinamide-GDP ribazoletransferase (260 aa).

6 helical membrane-spanning segments follow: residues 40–60, 64–84, 117–137, 142–162, 189–209, and 210–230; these read AFPFAGLLIGFVPAFALLLLL, ADPLVAALVALAVQALVTGAL, YGAIALILSFAIRAAALAAIV, PLAAVLAIPAVAALSRGAITW, FALVAAGLLAALLIWPAFGLW, and PLVASLLAAGAAGFVCTVFIR.

It belongs to the CobS family. It depends on Mg(2+) as a cofactor.

The protein resides in the cell inner membrane. It catalyses the reaction alpha-ribazole + adenosylcob(III)inamide-GDP = adenosylcob(III)alamin + GMP + H(+). It carries out the reaction alpha-ribazole 5'-phosphate + adenosylcob(III)inamide-GDP = adenosylcob(III)alamin 5'-phosphate + GMP + H(+). It participates in cofactor biosynthesis; adenosylcobalamin biosynthesis; adenosylcobalamin from cob(II)yrinate a,c-diamide: step 7/7. Functionally, joins adenosylcobinamide-GDP and alpha-ribazole to generate adenosylcobalamin (Ado-cobalamin). Also synthesizes adenosylcobalamin 5'-phosphate from adenosylcobinamide-GDP and alpha-ribazole 5'-phosphate. The sequence is that of Adenosylcobinamide-GDP ribazoletransferase from Rhizobium etli (strain CIAT 652).